The primary structure comprises 151 residues: Small ribosomal subunit protein uS13 (151 aa).

This sequence belongs to the universal ribosomal protein uS13 family. In terms of assembly, part of the 30S ribosomal subunit. Forms a loose heterodimer with protein S19. Forms two bridges to the 50S subunit in the 70S ribosome.

Its function is as follows. Located at the top of the head of the 30S subunit, it contacts several helices of the 16S rRNA. In the 70S ribosome it contacts the 23S rRNA (bridge B1a) and protein L5 of the 50S subunit (bridge B1b), connecting the 2 subunits; these bridges are implicated in subunit movement. This is Small ribosomal subunit protein uS13 from Methanospirillum hungatei JF-1 (strain ATCC 27890 / DSM 864 / NBRC 100397 / JF-1).